Here is a 523-residue protein sequence, read N- to C-terminus: GMP synthase [glutamine-hydrolyzing] (523 aa).

In terms of domain architecture, Glutamine amidotransferase type-1 spans 8–205 (KILILDFGSQ…VVDICGCETN (198 aa)). The active-site Nucleophile is the Cys-85. Active-site residues include His-179 and Glu-181. The GMPS ATP-PPase domain maps to 206 to 398 (WTAENIIEDA…LGLPAEMLNR (193 aa)). Residue 233–239 (SGGVDSS) coordinates ATP.

In terms of assembly, homodimer.

The enzyme catalyses XMP + L-glutamine + ATP + H2O = GMP + L-glutamate + AMP + diphosphate + 2 H(+). It participates in purine metabolism; GMP biosynthesis; GMP from XMP (L-Gln route): step 1/1. Functionally, catalyzes the synthesis of GMP from XMP. This chain is GMP synthase [glutamine-hydrolyzing], found in Histophilus somni (strain 2336) (Haemophilus somnus).